We begin with the raw amino-acid sequence, 292 residues long: Nitrogenase iron protein (292 aa).

Position 10–17 (10–17 (GKGGIGKS)) interacts with ATP. Residue Cys-98 participates in [4Fe-4S] cluster binding. Position 101 is an ADP-ribosylarginine; by dinitrogenase reductase ADP-ribosyltransferase (Arg-101). Cys-133 contacts [4Fe-4S] cluster.

Belongs to the NifH/BchL/ChlL family. In terms of assembly, homodimer. It depends on [4Fe-4S] cluster as a cofactor. The reversible ADP-ribosylation of Arg-101 inactivates the nitrogenase reductase and regulates nitrogenase activity.

The catalysed reaction is N2 + 8 reduced [2Fe-2S]-[ferredoxin] + 16 ATP + 16 H2O = H2 + 8 oxidized [2Fe-2S]-[ferredoxin] + 2 NH4(+) + 16 ADP + 16 phosphate + 6 H(+). Functionally, the key enzymatic reactions in nitrogen fixation are catalyzed by the nitrogenase complex, which has 2 components: the iron protein and the molybdenum-iron protein. In Teredinibacter turnerae (strain ATCC 39867 / T7901), this protein is Nitrogenase iron protein.